We begin with the raw amino-acid sequence, 477 residues long: PTS system glucose-specific EIICB component (477 aa).

One can recognise a PTS EIIC type-1 domain in the interval 1–388 (MFKNVFANLQ…FNLDTPGREN (388 aa)). Helical transmembrane passes span 15 to 35 (SLMLPVSVLPIAGILLGIGSA), 51 to 71 (TGGSVFSNMPLIFAIGVALGF), 76 to 96 (GVAALAAVVSYGILIQTLTAV), 112 to 132 (HLSDTGILGGIIAGAISAYMF), 152 to 172 (FVPIISGLSAILIGVILSLIW), 191 to 211 (PILAFALYGLVERALVPFGLH), 250 to 270 (LSGGFIFKMYGLPGAALAIWH), 280 to 300 (IGSIMISAALTAFLTGITEPI), 304 to 324 (FIIVAPVLYVIHAILAGLSFP), and 357 to 377 (FPIIGILYGLLYYILFYLFII). The region spanning 399–477 (NEIAPYIITA…TAMDECIKNI (79 aa)) is the PTS EIIB type-1 domain. C421 serves as the catalytic Phosphocysteine intermediate; for EIIB activity. C421 carries the post-translational modification Phosphocysteine.

The protein localises to the cell inner membrane. It carries out the reaction N(pros)-phospho-L-histidyl-[protein] + D-glucose(out) = D-glucose 6-phosphate(in) + L-histidyl-[protein]. Functionally, the phosphoenolpyruvate-dependent sugar phosphotransferase system (sugar PTS), a major carbohydrate active transport system, catalyzes the phosphorylation of incoming sugar substrates concomitantly with their translocation across the cell membrane. The enzyme II complex composed of PtsG and Crr is involved in glucose transport. This chain is PTS system glucose-specific EIICB component (ptsG), found in Buchnera aphidicola subsp. Acyrthosiphon pisum (strain APS) (Acyrthosiphon pisum symbiotic bacterium).